Reading from the N-terminus, the 401-residue chain is Riboflavin biosynthesis protein RibBA (401 aa).

The segment at 1 to 203 (MTDFQFSKVE…IQQLQEYRRK (203 aa)) is DHBP synthase. D-ribulose 5-phosphate-binding positions include 30-31 (RE), Asp-35, 142-146 (RNGHT), and Glu-166. Residue Glu-31 participates in Mg(2+) binding. Residue His-145 participates in Mg(2+) binding. The interval 204–401 (HDSLVKQISV…QIKMGHMFNF (198 aa)) is GTP cyclohydrolase II. Position 254–258 (254–258 (RIHSE)) interacts with GTP. Zn(2+) is bound by residues Cys-259, Cys-270, and Cys-272. GTP is bound by residues Gln-275, 297-299 (EGR), and Thr-319. The Proton acceptor; for GTP cyclohydrolase activity role is filled by Asp-331. Arg-333 functions as the Nucleophile; for GTP cyclohydrolase activity in the catalytic mechanism. GTP-binding residues include Thr-354 and Lys-359.

The protein in the N-terminal section; belongs to the DHBP synthase family. This sequence in the C-terminal section; belongs to the GTP cyclohydrolase II family. Mg(2+) is required as a cofactor. Mn(2+) serves as cofactor. It depends on Zn(2+) as a cofactor.

It carries out the reaction D-ribulose 5-phosphate = (2S)-2-hydroxy-3-oxobutyl phosphate + formate + H(+). The enzyme catalyses GTP + 4 H2O = 2,5-diamino-6-hydroxy-4-(5-phosphoribosylamino)-pyrimidine + formate + 2 phosphate + 3 H(+). Its pathway is cofactor biosynthesis; riboflavin biosynthesis; 2-hydroxy-3-oxobutyl phosphate from D-ribulose 5-phosphate: step 1/1. It participates in cofactor biosynthesis; riboflavin biosynthesis; 5-amino-6-(D-ribitylamino)uracil from GTP: step 1/4. Functionally, catalyzes the conversion of D-ribulose 5-phosphate to formate and 3,4-dihydroxy-2-butanone 4-phosphate. In terms of biological role, catalyzes the conversion of GTP to 2,5-diamino-6-ribosylamino-4(3H)-pyrimidinone 5'-phosphate (DARP), formate and pyrophosphate. The polypeptide is Riboflavin biosynthesis protein RibBA (Actinobacillus pleuropneumoniae serotype 7 (strain AP76)).